Consider the following 359-residue polypeptide: Phospho-N-acetylmuramoyl-pentapeptide-transferase (359 aa).

10 consecutive transmembrane segments (helical) span residues 3–23 (QIMIAVAIAVAVSILLTPALI), 55–75 (VAILAGIWAGYFGTHLAGLAF), 80–100 (ITASGLLVLGLATSLGGVGFL), 117–137 (TAKTVGQITSAVLFAVLVLQF), 156–176 (IATVTLTPALFVLFCVLVVSA), 187–207 (LDGLAAGCMAMVTGAYVLITF), 231–251 (LALIAAATAGACIGFLWWNAA), 255–275 (IFMGDTGSLALGGIIAGLSVT), 280–300 (ILAVVLGALFVAEITSVVLQI), and 334–354 (FWLLTAITCGLGVALFYGEWL).

It belongs to the glycosyltransferase 4 family. MraY subfamily. It depends on Mg(2+) as a cofactor.

The protein resides in the cell membrane. The enzyme catalyses UDP-N-acetyl-alpha-D-muramoyl-L-alanyl-gamma-D-glutamyl-meso-2,6-diaminopimeloyl-D-alanyl-D-alanine + di-trans,octa-cis-undecaprenyl phosphate = di-trans,octa-cis-undecaprenyl diphospho-N-acetyl-alpha-D-muramoyl-L-alanyl-D-glutamyl-meso-2,6-diaminopimeloyl-D-alanyl-D-alanine + UMP. The protein operates within cell wall biogenesis; peptidoglycan biosynthesis. In terms of biological role, catalyzes the initial step of the lipid cycle reactions in the biosynthesis of the cell wall peptidoglycan: transfers peptidoglycan precursor phospho-MurNAc-pentapeptide from UDP-MurNAc-pentapeptide onto the lipid carrier undecaprenyl phosphate, yielding undecaprenyl-pyrophosphoryl-MurNAc-pentapeptide, known as lipid I. The polypeptide is Phospho-N-acetylmuramoyl-pentapeptide-transferase (Mycobacterium ulcerans (strain Agy99)).